Consider the following 1159-residue polypeptide: Ferroxidase HEPHL1 (1159 aa).

The first 24 residues, 1–24 (MPRKQPAGCIFLLTFLGLSGLVGT), serve as a signal peptide directing secretion. Plastocyanin-like domains lie at 25–207 (VTRT…LLVC), 218–366 (TRND…VDNC), 379–561 (QRRY…LLVC), 571–719 (TQKG…VSSC), 731–907 (MIRT…LITC), and 915–1092 (KGRR…VPSN). At 25-1114 (VTRTYYIGIV…KNLGPTGAKA (1090 aa)) the chain is on the extracellular side. The Cu cation site is built by His127 and His129. Asn161 carries an N-linked (GlcNAc...) asparagine glycan. Cys181 and Cys207 are disulfide-bonded. Residues His187 and His189 each contribute to the Cu cation site. Asn236 carries an N-linked (GlcNAc...) asparagine glycan. Residues Cys285 and Cys366 are joined by a disulfide bond. Cu cation is bound by residues His304, Cys347, and His352. The N-linked (GlcNAc...) asparagine glycan is linked to Asn407. An intrachain disulfide couples Cys535 to Cys561. Asn589 carries N-linked (GlcNAc...) asparagine glycosylation. Cys638 and Cys719 are oxidised to a cystine. Residues His657, Cys700, His705, and Met710 each coordinate Cu cation. N-linked (GlcNAc...) asparagine glycosylation occurs at Asn772. Cys881 and Cys907 are oxidised to a cystine. Asn935 is a glycosylation site (N-linked (GlcNAc...) asparagine). The Cu cation site is built by His1003, His1006, His1008, His1048, Cys1049, His1050, His1054, and Met1059. The helical transmembrane segment at 1115–1135 (ALVILFIIGLLLLITTVILSL) threads the bilayer. Residues 1136–1159 (RLCSAMKQTDYQQVQSCALPTDAL) lie on the Cytoplasmic side of the membrane.

Belongs to the multicopper oxidase family. Cu cation serves as cofactor.

The protein resides in the membrane. The enzyme catalyses 4 Fe(2+) + O2 + 4 H(+) = 4 Fe(3+) + 2 H2O. Its function is as follows. Is a copper-binding glycoprotein with ferroxidase activity. It oxidizes Fe(2+) to Fe(3+) without releasing radical oxygen species. May be involved in the regulation of intracellular iron content. This is Ferroxidase HEPHL1 (HEPHL1) from Homo sapiens (Human).